The following is a 1286-amino-acid chain: MAVISKVTYSLYDQKEINATDIIISHVKNDDDIGTVKDGRLGAMDGALCKTCGKTELECFGHWGKVSIYKTHIVKPEFISEIIRLLNHICIHCGLLRSREPYSNDINLKELSGHALRRLKDKILSKKKSCWNSECMQPYQKISFSKKKVCFVNKLDDINVPNSLIYQKLISIHEKFWPLLEIYQYPANLFYTDYFPIPPLIIRPAISFWIDSIPKETNELTYLLGMIVKNCNLNADEQVIQKAVIEYDDIKIISNNTTSINLSYITSGKNNMIRSYIVARRKDQTARSVIGPSTSITVNEVGMPAYIRNTLTEKIFVNAFTVNKVKQLLASNQVKFYFNKRLNQLTRIRQGKFIKNKIHLLPGDWVEVAVQEYTSIIFGRQPSLHRYNVIASSIRATEGDTIKISPGIANSQNADFDGDEEWMILEQNPKAVVEQSILMYPTTLLKHDIHGAPVYGSIQDEIVAAYSLFRIQDLCLDEVLNILGKYGREFDPKGKCKFSGKDIYTYLIGEKINYPGLLKDGEIIANDVDSNFVVAMRHLSLAGLLSDHKSNVEGINFIIKSSYVFKRYLSIYGFGVTFKDLRPNSTFTNKLEAINVEKIELIKEAYAKYLKDVRDGKIVPLSKALEADYVESMLSNLTNLNIREIEEHMRQTLIDNPDNNLLKMAKAGYKVNPTELMYILGTYGQQRIDGEPAETRVLGRVLPYYLPDSKDPEGRGYILNSLTKGLTGSQYYFSMLVARSQSTDIVCETSRTGTLARKIIKKMEDMVVDGYGQVVIGNTLIKYAANYTKILGSVCKPVDLIYPDESMTWYLEISALWNKIKQGFVYSQKQKLAKKTLAPFNFLVFVKPTTEDNAIKVKDLYDMIHNVIDDVREKYFFTVSNIDFMEYIFLTHLNPSRIRITKETAITIFEKFYEKLNYTLGGGTPIGIISAQVLSEKFTQQALSSFHTTEKSGAVKQKLGFNEFNNLTNLSKNKTEIITLVSDDISKLQSVKINFEFVCLGELNPNITLRKETDRYVVDIIVNRLYIKRAEITELVVEYMIERFISFSVIVKEWGMETFIEDEDNIRFTVYLNFVEPEELNLSKFMMVLPGAANKGKISKFKIPISDYTGYDDFNQTKKLNKMTVELMNLKELGSFDLENVNVYPGVWNTYDIFGIEAARGYLCEAMLNTYGEGFDYLYQPCDLLASLLCASYEPESVNKFKFGAASTLKRATFGDNKALLNAALHKKSEPINDNSSCHFFSKVPNIGTGYYKYFIDLGLLMRMERKLSDKISSQKIKEMEETEDF.

This sequence belongs to the poxviridae DNA-directed RNA polymerase 147 kDa subunit family. In terms of assembly, the DNA-dependent RNA polymerase used for intermediate and late genes expression consists of eight subunits Rpo30/OPG66, Rpo7/OPG90, Rpo22/OPG103, Rpo147/OPG105, Rpo18/OPG119, Rpo19/OPG131, Rpo132/OPG151 and Rpo35/OPG156. The same holoenzyme, with the addition of the transcription-specificity factor OPG109, is used for early gene expression.

Its subcellular location is the virion. It carries out the reaction RNA(n) + a ribonucleoside 5'-triphosphate = RNA(n+1) + diphosphate. In terms of biological role, part of the DNA-dependent RNA polymerase which catalyzes the transcription of viral DNA into RNA using the four ribonucleoside triphosphates as substrates. Responsible for the transcription of early, intermediate and late genes. DNA-dependent RNA polymerase associates with the early transcription factor (ETF), itself composed of OPG118 and OPG133, thereby allowing the early genes transcription. Late transcription, and probably also intermediate transcription, require newly synthesized RNA polymerase. This is DNA-directed RNA polymerase 147 kDa polypeptide (OPG105) from Variola virus (isolate Human/India/Ind3/1967) (VARV).